A 135-amino-acid chain; its full sequence is Retinol-binding protein 5 (135 aa).

It belongs to the calycin superfamily. Fatty-acid binding protein (FABP) family.

The protein localises to the cytoplasm. Its function is as follows. Intracellular transport of retinol. This chain is Retinol-binding protein 5 (RBP5), found in Pongo abelii (Sumatran orangutan).